The primary structure comprises 430 residues: Enolase (430 aa).

Position 163 (Gln-163) interacts with (2R)-2-phosphoglycerate. Glu-205 (proton donor) is an active-site residue. Mg(2+)-binding residues include Asp-242, Glu-286, and Asp-313. Positions 338, 367, 368, and 389 each coordinate (2R)-2-phosphoglycerate. Residue Lys-338 is the Proton acceptor of the active site.

This sequence belongs to the enolase family. Mg(2+) is required as a cofactor.

The protein localises to the cytoplasm. It is found in the secreted. The protein resides in the cell surface. It carries out the reaction (2R)-2-phosphoglycerate = phosphoenolpyruvate + H2O. It functions in the pathway carbohydrate degradation; glycolysis; pyruvate from D-glyceraldehyde 3-phosphate: step 4/5. Functionally, catalyzes the reversible conversion of 2-phosphoglycerate (2-PG) into phosphoenolpyruvate (PEP). It is essential for the degradation of carbohydrates via glycolysis. This Symbiobacterium thermophilum (strain DSM 24528 / JCM 14929 / IAM 14863 / T) protein is Enolase.